Consider the following 393-residue polypeptide: Elongation factor Tu (393 aa).

Positions 10 to 203 constitute a tr-type G domain; sequence KPHVNIGTIG…AVDNYIPEPV (194 aa). A G1 region spans residues 19-26; it reads GHVDHGKT. Residue 19-26 participates in GTP binding; sequence GHVDHGKT. T26 lines the Mg(2+) pocket. The tract at residues 60-64 is G2; sequence GITIS. A G3 region spans residues 81 to 84; the sequence is DCPG. GTP contacts are provided by residues 81–85 and 136–139; these read DCPGH and NKVD. Positions 136-139 are G4; it reads NKVD. The G5 stretch occupies residues 173–175; that stretch reads SAL.

This sequence belongs to the TRAFAC class translation factor GTPase superfamily. Classic translation factor GTPase family. EF-Tu/EF-1A subfamily. As to quaternary structure, monomer.

It is found in the cytoplasm. The enzyme catalyses GTP + H2O = GDP + phosphate + H(+). Its function is as follows. GTP hydrolase that promotes the GTP-dependent binding of aminoacyl-tRNA to the A-site of ribosomes during protein biosynthesis. The polypeptide is Elongation factor Tu (Chlorobium phaeovibrioides (strain DSM 265 / 1930) (Prosthecochloris vibrioformis (strain DSM 265))).